A 1025-amino-acid chain; its full sequence is Synapsin (1025 aa).

Disordered stretches follow at residues 1–94, 439–784, 872–910, and 995–1025; these read MKRG…SRES, VCRP…NYGS, YDSN…KHSD, and DFSD…LDLK. Residues 34-52 show a composition bias toward pro residues; sequence TKPPVAGGPPNMPPPPAPG. Positions 454 to 463 are enriched in low complexity; that stretch reads SRSSVSSRAE. Pro residues predominate over residues 472–492; it reads PTPPLPAGPRPAPMGGPPPIP. Composition is skewed to low complexity over residues 499-546 and 594-626; these read VGSI…SSVS and SETS…QFSF. Serine 539 carries the post-translational modification Phosphoserine. Over residues 651-673 the composition is skewed to polar residues; sequence TTASSAVRPESSVSVSDSRNTDT. The span at 690-702 shows a compositional bias: basic and acidic residues; sequence QQERVNPFDKEPS. The span at 703-725 shows a compositional bias: low complexity; the sequence is KSGSAASIHTSSSSSISSSSISS. Residues 726 to 735 are compositionally biased toward polar residues; sequence RINRNGNAIQ. The segment covering 736–749 has biased composition (pro residues); the sequence is SPPPPAGPPPPPPT. Residues 750 to 759 show a composition bias toward polar residues; sequence NVTAVGSNAN. Residues 760 to 772 are compositionally biased toward low complexity; the sequence is SSSGYRNSFSSSL. Positions 872-904 are enriched in polar residues; sequence YDSNSIASQGEGLNNPSDLPSYTRPSYSRSESN. Residues 995 to 1007 show a composition bias toward low complexity; the sequence is DFSDSGSMSSIGS.

This sequence belongs to the synapsin family. In terms of assembly, identified in a complex with Syt1 and nwk. In terms of tissue distribution, widely expressed in the embryonic and adult nervous system synaptic terminals.

The protein localises to the synapse. Plays a significant role in nervous system function, which is subtle at the cellular level but manifests itself in complex behavior. This chain is Synapsin (Syn), found in Drosophila melanogaster (Fruit fly).